The sequence spans 171 residues: N5-carboxyaminoimidazole ribonucleotide mutase (171 aa).

Residues Ser10, Asp13, and Arg40 each coordinate substrate.

Belongs to the AIR carboxylase family. Class I subfamily.

The enzyme catalyses 5-carboxyamino-1-(5-phospho-D-ribosyl)imidazole + H(+) = 5-amino-1-(5-phospho-D-ribosyl)imidazole-4-carboxylate. The protein operates within purine metabolism; IMP biosynthesis via de novo pathway; 5-amino-1-(5-phospho-D-ribosyl)imidazole-4-carboxylate from 5-amino-1-(5-phospho-D-ribosyl)imidazole (N5-CAIR route): step 2/2. In terms of biological role, catalyzes the conversion of N5-carboxyaminoimidazole ribonucleotide (N5-CAIR) to 4-carboxy-5-aminoimidazole ribonucleotide (CAIR). The sequence is that of N5-carboxyaminoimidazole ribonucleotide mutase from Thermotoga maritima (strain ATCC 43589 / DSM 3109 / JCM 10099 / NBRC 100826 / MSB8).